The chain runs to 396 residues: Elongation factor Tu (396 aa).

In terms of domain architecture, tr-type G spans 10 to 206 (KPHVNVGTIG…ALDSFIPEPT (197 aa)). The G1 stretch occupies residues 19–26 (GHVDHGKT). A GTP-binding site is contributed by 19–26 (GHVDHGKT). T26 is a Mg(2+) binding site. Residues 60–64 (GITIS) are G2. Residues 81 to 84 (DCPG) form a G3 region. GTP-binding positions include 81–85 (DCPGH) and 136–139 (NKAD). Positions 136 to 139 (NKAD) are G4. Positions 174–176 (SAR) are G5.

This sequence belongs to the TRAFAC class translation factor GTPase superfamily. Classic translation factor GTPase family. EF-Tu/EF-1A subfamily. As to quaternary structure, monomer.

Its subcellular location is the cytoplasm. The enzyme catalyses GTP + H2O = GDP + phosphate + H(+). GTP hydrolase that promotes the GTP-dependent binding of aminoacyl-tRNA to the A-site of ribosomes during protein biosynthesis. The sequence is that of Elongation factor Tu from Xanthomonas euvesicatoria pv. vesicatoria (strain 85-10) (Xanthomonas campestris pv. vesicatoria).